Here is a 377-residue protein sequence, read N- to C-terminus: GTPase Obg (377 aa).

The Obg domain occupies 1–159 (MKFVDEATIE…RRLRMELKVL (159 aa)). The tract at residues 127–148 (NIHFKSSTNRAPRQWTPGKEGE) is disordered. The OBG-type G domain maps to 160–336 (ADVGLLGLPN…LIWALQDYLD (177 aa)). GTP contacts are provided by residues 166 to 173 (GLPNAGKS), 191 to 195 (FTTLH), 213 to 216 (DIPG), 288 to 291 (NKLD), and 317 to 319 (SGL). The Mg(2+) site is built by serine 173 and threonine 193. Positions 339-377 (KRKDQDAQDQADGTYVFEDPRFDASRGGAAPATPPGGDE) are disordered.

This sequence belongs to the TRAFAC class OBG-HflX-like GTPase superfamily. OBG GTPase family. Monomer. Mg(2+) serves as cofactor.

It localises to the cytoplasm. Its function is as follows. An essential GTPase which binds GTP, GDP and possibly (p)ppGpp with moderate affinity, with high nucleotide exchange rates and a fairly low GTP hydrolysis rate. Plays a role in control of the cell cycle, stress response, ribosome biogenesis and in those bacteria that undergo differentiation, in morphogenesis control. This is GTPase Obg from Bordetella bronchiseptica (strain ATCC BAA-588 / NCTC 13252 / RB50) (Alcaligenes bronchisepticus).